Reading from the N-terminus, the 164-residue chain is Phosphopantetheine adenylyltransferase (164 aa).

Ser-9 is a binding site for substrate. Residues 9-10 and His-17 contribute to the ATP site; that span reads SF. Residues Lys-41, Leu-73, and Lys-87 each contribute to the substrate site. ATP-binding positions include 88–90, Glu-98, and 122–128; these read GLR and YSYLSSS.

This sequence belongs to the bacterial CoaD family. Homohexamer. Mg(2+) serves as cofactor.

It is found in the cytoplasm. It catalyses the reaction (R)-4'-phosphopantetheine + ATP + H(+) = 3'-dephospho-CoA + diphosphate. It functions in the pathway cofactor biosynthesis; coenzyme A biosynthesis; CoA from (R)-pantothenate: step 4/5. Its function is as follows. Reversibly transfers an adenylyl group from ATP to 4'-phosphopantetheine, yielding dephospho-CoA (dPCoA) and pyrophosphate. The sequence is that of Phosphopantetheine adenylyltransferase from Rhodococcus erythropolis (strain PR4 / NBRC 100887).